Reading from the N-terminus, the 91-residue chain is DNA-directed RNA polymerase subunit omega (91 aa).

It belongs to the RNA polymerase subunit omega family. In terms of assembly, the RNAP catalytic core consists of 2 alpha, 1 beta, 1 beta' and 1 omega subunit. When a sigma factor is associated with the core the holoenzyme is formed, which can initiate transcription.

It catalyses the reaction RNA(n) + a ribonucleoside 5'-triphosphate = RNA(n+1) + diphosphate. Its function is as follows. Promotes RNA polymerase assembly. Latches the N- and C-terminal regions of the beta' subunit thereby facilitating its interaction with the beta and alpha subunits. This is DNA-directed RNA polymerase subunit omega from Enterobacter sp. (strain 638).